Here is a 96-residue protein sequence, read N- to C-terminus: Protein Vpr (96 aa).

The tract at residues 1–42 is homooligomerization; it reads MEQAPEDQGPQREPYNEWTLDLLEELKNEAVRHFPRPWLHSL. Phosphoserine; by host is present on residues serine 79, serine 94, and serine 96.

Belongs to the HIV-1 VPR protein family. Homooligomer, may form homodimer. Interacts with p6-gag region of the Pr55 Gag precursor protein through a (Leu-X-X)4 motif near the C-terminus of the P6gag protein. Interacts with host UNG. May interact with host RAD23A/HHR23A. Interacts with host VPRBP/DCAF1, leading to hijack the CUL4A-RBX1-DDB1-DCAF1/VPRBP complex, mediating ubiquitination of host proteins such as TERT and ZGPAT and arrest of the cell cycle in G2 phase. Phosphorylated on several residues by host. These phosphorylations regulate VPR activity for the nuclear import of the HIV-1 pre-integration complex.

The protein resides in the virion. It localises to the host nucleus. It is found in the host extracellular space. Functionally, during virus replication, may deplete host UNG protein, and incude G2-M cell cycle arrest. Acts by targeting specific host proteins for degradation by the 26S proteasome, through association with the cellular CUL4A-DDB1 E3 ligase complex by direct interaction with host VPRPB/DCAF-1. Cell cycle arrest reportedly occurs within hours of infection and is not blocked by antiviral agents, suggesting that it is initiated by the VPR carried into the virion. Additionally, VPR induces apoptosis in a cell cycle dependent manner suggesting that these two effects are mechanistically linked. Detected in the serum and cerebrospinal fluid of AIDS patient, VPR may also induce cell death to bystander cells. During virus entry, plays a role in the transport of the viral pre-integration (PIC) complex to the host nucleus. This function is crucial for viral infection of non-dividing macrophages. May act directly at the nuclear pore complex, by binding nucleoporins phenylalanine-glycine (FG)-repeat regions. The polypeptide is Protein Vpr (Human immunodeficiency virus type 1 group M subtype F1 (isolate 93BR020) (HIV-1)).